Reading from the N-terminus, the 121-residue chain is Group 1 truncated hemoglobin (121 aa).

At Met1 the chain carries N-acetylmethionine. His73 is a binding site for heme.

The protein belongs to the truncated hemoglobin family. Group I subfamily. Monomer. Heme serves as cofactor.

The chain is Group 1 truncated hemoglobin from Tetrahymena thermophila.